The chain runs to 95 residues: Small ubiquitin-related modifier 2 (95 aa).

Residue Met-1 forms a Peptide (Met-Gly) (interchain with G-Cter in ubiquitin) linkage. Glycyl lysine isopeptide (Lys-Gly) (interchain with G-Cter in SUMO2) cross-links involve residues Lys-5 and Lys-7. Lys-11 is modified (N6-acetyllysine; alternate). Lys-11 participates in a covalent cross-link: Glycyl lysine isopeptide (Lys-Gly) (interchain with G-Cter in SUMO); alternate. Lys-11 participates in a covalent cross-link: Glycyl lysine isopeptide (Lys-Gly) (interchain with G-Cter in SUMO1); alternate. Lys-11 participates in a covalent cross-link: Glycyl lysine isopeptide (Lys-Gly) (interchain with G-Cter in SUMO2); alternate. Lys-11 is covalently cross-linked (Glycyl lysine isopeptide (Lys-Gly) (interchain with G-Cter in ubiquitin); alternate). Residues 16 to 95 (DHINLKVAGQ…VFQQQTGGVY (80 aa)) enclose the Ubiquitin-like domain. A Glycyl lysine isopeptide (Lys-Gly) (interchain with G-Cter in SUMO2) cross-link involves residue Lys-21. Residue Gly-93 forms a Glycyl lysine isopeptide (Gly-Lys) (interchain with K-? in acceptor proteins) linkage. The propeptide occupies 94 to 95 (VY).

This sequence belongs to the ubiquitin family. SUMO subfamily. Interacts with SAE2 and UBE2I. Interacts with ZNF451. Identified in a complex with ZNF451 and UBE2I/UBC9, where one ZNF451 interacts with one UBE2I/UBC9 and two SUMO2 chains, one bound to the UBE2I/UBC9 active site and the other to another region of the same UBE2I/UBC9 molecule. Covalently attached to a number of proteins. Interacts with PELP1. Interacts with USP25; the interaction sumoylates USP25. Interacts with SIMC1, CASP8AP2, RNF111 and SOBP (via SIM domains). Interacts with MTA1. Interacts with HINT1. Interacts with GCNA (via SIM domains); this interaction allows the GCNA recruitment to DPCs sites. Polymeric chains can be formed through Lys-11 cross-linking. Polymeric SUMO2 chains undergo 'Lys-6'-, 'Lys-11'-, 'Lys-48'- and 'Lys-63'-linked polyubiquitination by RNF4. In terms of processing, cleavage of precursor form by SENP1 or SENP2 is necessary for function. Post-translationally, monoubiquitinated N-terminally by UBE2W, which primes it for RNF4-dependent polyubiquitination by the UBE2V1-UBE2N heterodimer.

The protein localises to the nucleus. Its subcellular location is the PML body. Its function is as follows. Ubiquitin-like protein that can be covalently attached to proteins as a monomer or as a lysine-linked polymer. Covalent attachment via an isopeptide bond to its substrates requires prior activation by the E1 complex SAE1-SAE2 and linkage to the E2 enzyme UBE2I, and can be promoted by an E3 ligase such as PIAS1-4, RANBP2 or CBX4. This post-translational modification on lysine residues of proteins plays a crucial role in a number of cellular processes such as nuclear transport, DNA replication and repair, mitosis and signal transduction. Polymeric SUMO2 chains are also susceptible to polyubiquitination which functions as a signal for proteasomal degradation of modified proteins. Plays a role in the regulation of sumoylation status of SETX. The chain is Small ubiquitin-related modifier 2 from Bos taurus (Bovine).